The primary structure comprises 2208 residues: Glutamate synthase 1 [NADH], chloroplastic (2208 aa).

Residues 1–49 constitute a chloroplast transit peptide; the sequence is MSAASSSSVLHLRTNQQLLSLRSLKNSTSVASQLAVTSGVSRRRSCTAR. The active-site Nucleophile is the cysteine 117. The region spanning 117-521 is the Glutamine amidotransferase type-2 domain; sequence CGVGFVAELS…PGMMLLVDFE (405 aa). Residues 1040–1067 form a disordered region; that stretch reads GKSNTGEGGELPSRMEPLADGSRNPKRS. FMN is bound at residue 1211-1268; it reads LAETHQTLVANDLRGRTVLQTDGQLKTGRDVAVAALLGAEEFGFSTAPLITLGCIMMR. Positions 1264, 1270, and 1275 each coordinate [3Fe-4S] cluster. 1995–2009 contacts NAD(+); sequence GGGDTGTDCIGTSIR.

The protein belongs to the glutamate synthase family. Monomer. Requires [3Fe-4S] cluster as cofactor. FAD serves as cofactor. The cofactor is FMN. As to expression, highly expressed in roots and at low levels in leaves.

The protein resides in the plastid. It is found in the chloroplast. The enzyme catalyses 2 L-glutamate + NAD(+) = L-glutamine + 2-oxoglutarate + NADH + H(+). Its pathway is amino-acid biosynthesis; L-glutamate biosynthesis via GLT pathway; L-glutamate from 2-oxoglutarate and L-glutamine (NAD(+) route): step 1/1. It functions in the pathway energy metabolism; nitrogen metabolism. Involved in glutamate biosynthesis. Required for non-photorespiratory ammonium assimilation. Probably involved in primary ammonium assimilation in roots. This chain is Glutamate synthase 1 [NADH], chloroplastic (GLT1), found in Arabidopsis thaliana (Mouse-ear cress).